Here is a 95-residue protein sequence, read N- to C-terminus: UPF0298 protein LVIS_1401 (95 aa).

Belongs to the UPF0298 family.

Its subcellular location is the cytoplasm. The chain is UPF0298 protein LVIS_1401 from Levilactobacillus brevis (strain ATCC 367 / BCRC 12310 / CIP 105137 / JCM 1170 / LMG 11437 / NCIMB 947 / NCTC 947) (Lactobacillus brevis).